Here is a 545-residue protein sequence, read N- to C-terminus: CTP synthase (545 aa).

Residues 1–266 (MTTNYIFVTG…DDYICKRFSL (266 aa)) are amidoligase domain. Ser-14 lines the CTP pocket. Ser-14 lines the UTP pocket. Residues 15–20 (SLGKGI) and Asp-72 contribute to the ATP site. Mg(2+) is bound by residues Asp-72 and Glu-140. Residues 147–149 (DIE), 187–192 (KTKPTQ), and Lys-223 contribute to the CTP site. UTP-binding positions include 187 to 192 (KTKPTQ) and Lys-223. Position 239–241 (239–241 (KDV)) interacts with ATP. Residues 291 to 542 (TIGMVGKYIE…VKAANEHQKR (252 aa)) form the Glutamine amidotransferase type-1 domain. L-glutamine is bound at residue Gly-352. Catalysis depends on Cys-379, which acts as the Nucleophile; for glutamine hydrolysis. Residues 380 to 383 (LGMQ), Glu-403, and Arg-470 contribute to the L-glutamine site. Residues His-515 and Glu-517 contribute to the active site.

Belongs to the CTP synthase family. In terms of assembly, homotetramer.

It catalyses the reaction UTP + L-glutamine + ATP + H2O = CTP + L-glutamate + ADP + phosphate + 2 H(+). It carries out the reaction L-glutamine + H2O = L-glutamate + NH4(+). The enzyme catalyses UTP + NH4(+) + ATP = CTP + ADP + phosphate + 2 H(+). It functions in the pathway pyrimidine metabolism; CTP biosynthesis via de novo pathway; CTP from UDP: step 2/2. Its activity is regulated as follows. Allosterically activated by GTP, when glutamine is the substrate; GTP has no effect on the reaction when ammonia is the substrate. The allosteric effector GTP functions by stabilizing the protein conformation that binds the tetrahedral intermediate(s) formed during glutamine hydrolysis. Inhibited by the product CTP, via allosteric rather than competitive inhibition. Its function is as follows. Catalyzes the ATP-dependent amination of UTP to CTP with either L-glutamine or ammonia as the source of nitrogen. Regulates intracellular CTP levels through interactions with the four ribonucleotide triphosphates. In Salmonella newport (strain SL254), this protein is CTP synthase.